The following is a 712-amino-acid chain: Polyribonucleotide nucleotidyltransferase (712 aa).

Mg(2+) is bound by residues aspartate 493 and aspartate 499. The 60-residue stretch at 560–619 (PRLLTFKVDPEDIGKIIGPGGKMVRSITEATGAKVDISDDGTITVSSSVGGQAEAARAMI) folds into the KH domain. In terms of domain architecture, S1 motif spans 629-697 (GQVYLGKVTR…HKGRVNLTRL (69 aa)).

The protein belongs to the polyribonucleotide nucleotidyltransferase family. The cofactor is Mg(2+).

The protein localises to the cytoplasm. It carries out the reaction RNA(n+1) + phosphate = RNA(n) + a ribonucleoside 5'-diphosphate. In terms of biological role, involved in mRNA degradation. Catalyzes the phosphorolysis of single-stranded polyribonucleotides processively in the 3'- to 5'-direction. This Synechococcus sp. (strain JA-3-3Ab) (Cyanobacteria bacterium Yellowstone A-Prime) protein is Polyribonucleotide nucleotidyltransferase.